A 75-amino-acid polypeptide reads, in one-letter code: Translation initiation factor IF-1, chloroplastic (75 aa).

The S1-like domain occupies 1–72 (MKKQNLIHAE…TKGRIIYRLS (72 aa)).

The protein belongs to the IF-1 family. Component of the 30S ribosomal translation pre-initiation complex which assembles on the 30S ribosome in the order IF-2 and IF-3, IF-1 and N-formylmethionyl-tRNA(fMet); mRNA recruitment can occur at any time during PIC assembly.

Its subcellular location is the plastid. The protein localises to the chloroplast. Its function is as follows. One of the essential components for the initiation of protein synthesis. Stabilizes the binding of IF-2 and IF-3 on the 30S subunit to which N-formylmethionyl-tRNA(fMet) subsequently binds. Helps modulate mRNA selection, yielding the 30S pre-initiation complex (PIC). Upon addition of the 50S ribosomal subunit IF-1, IF-2 and IF-3 are released leaving the mature 70S translation initiation complex. This is Translation initiation factor IF-1, chloroplastic from Pinus koraiensis (Korean pine).